A 240-amino-acid chain; its full sequence is Probable septum site-determining protein MinC (240 aa).

This sequence belongs to the MinC family. In terms of assembly, interacts with MinD and FtsZ.

Cell division inhibitor that blocks the formation of polar Z ring septums. Rapidly oscillates between the poles of the cell to destabilize FtsZ filaments that have formed before they mature into polar Z rings. Prevents FtsZ polymerization. This is Probable septum site-determining protein MinC from Chromobacterium violaceum (strain ATCC 12472 / DSM 30191 / JCM 1249 / CCUG 213 / NBRC 12614 / NCIMB 9131 / NCTC 9757 / MK).